We begin with the raw amino-acid sequence, 182 residues long: Ribosome maturation factor RimM (182 aa).

A PRC barrel domain is found at 99–176; it reads DDEYYHADLI…ELPAEIEGDT (78 aa).

It belongs to the RimM family. In terms of assembly, binds ribosomal protein uS19.

Its subcellular location is the cytoplasm. Its function is as follows. An accessory protein needed during the final step in the assembly of 30S ribosomal subunit, possibly for assembly of the head region. Essential for efficient processing of 16S rRNA. May be needed both before and after RbfA during the maturation of 16S rRNA. It has affinity for free ribosomal 30S subunits but not for 70S ribosomes. This chain is Ribosome maturation factor RimM, found in Rhodopseudomonas palustris (strain HaA2).